Consider the following 258-residue polypeptide: HLA class II histocompatibility antigen, DP beta 1 chain (258 aa).

Positions 1–29 are cleaved as a signal peptide; sequence MMVLQVSAAPRTVALTALLMVLLTSVVQG. The interval 30 to 121 is beta-1; that stretch reads RATPENYLFQ…LGGPMTLQRR (92 aa). The Extracellular portion of the chain corresponds to 30–225; the sequence is RATPENYLFQ…KAQSDSARSK (196 aa). 2 cysteine pairs are disulfide-bonded: Cys44–Cys106 and Cys144–Cys200. A glycan (N-linked (GlcNAc...) asparagine) is linked at Asn48. The segment at 122 to 215 is beta-2; it reads VQPRVNVSPS…SLDSPVTVEW (94 aa). The Ig-like C1-type domain maps to 124–212; it reads PRVNVSPSKK…EHTSLDSPVT (89 aa). The connecting peptide stretch occupies residues 216 to 225; sequence KAQSDSARSK. Residues 226-246 traverse the membrane as a helical segment; that stretch reads TLTGAGGFVLGLIICGVGIFM. The Cytoplasmic portion of the chain corresponds to 247–258; sequence HRRSKKVQRGSA.

The protein belongs to the MHC class II family. Heterodimer of an alpha and a beta subunit; also referred as MHC class II molecule. In the endoplasmic reticulum (ER) it forms a heterononamer; 3 MHC class II molecules bind to a CD74 homotrimer (also known as invariant chain or HLA class II histocompatibility antigen gamma chain). In the endosomal/lysosomal system; CD74 undergoes sequential degradation by various proteases; leaving a small fragment termed CLIP on each MHC class II molecule. MHC class II molecule interacts with HLA_DM, and HLA_DO in B-cells, in order to release CLIP and facilitate the binding of antigenic peptides.

It is found in the cell membrane. It localises to the endoplasmic reticulum membrane. Its subcellular location is the golgi apparatus. The protein resides in the trans-Golgi network membrane. The protein localises to the endosome membrane. It is found in the lysosome membrane. Functionally, binds peptides derived from antigens that access the endocytic route of antigen presenting cells (APC) and presents them on the cell surface for recognition by the CD4 T-cells. The peptide binding cleft accommodates peptides of 10-30 residues. The peptides presented by MHC class II molecules are generated mostly by degradation of proteins that access the endocytic route, where they are processed by lysosomal proteases and other hydrolases. Exogenous antigens that have been endocytosed by the APC are thus readily available for presentation via MHC II molecules, and for this reason this antigen presentation pathway is usually referred to as exogenous. As membrane proteins on their way to degradation in lysosomes as part of their normal turn-over are also contained in the endosomal/lysosomal compartments, exogenous antigens must compete with those derived from endogenous components. Autophagy is also a source of endogenous peptides, autophagosomes constitutively fuse with MHC class II loading compartments. In addition to APCs, other cells of the gastrointestinal tract, such as epithelial cells, express MHC class II molecules and CD74 and act as APCs, which is an unusual trait of the GI tract. To produce a MHC class II molecule that presents an antigen, three MHC class II molecules (heterodimers of an alpha and a beta chain) associate with a CD74 trimer in the ER to form a heterononamer. Soon after the entry of this complex into the endosomal/lysosomal system where antigen processing occurs, CD74 undergoes a sequential degradation by various proteases, including CTSS and CTSL, leaving a small fragment termed CLIP (class-II-associated invariant chain peptide). The removal of CLIP is facilitated by HLA-DM via direct binding to the alpha-beta-CLIP complex so that CLIP is released. HLA-DM stabilizes MHC class II molecules until primary high affinity antigenic peptides are bound. The MHC II molecule bound to a peptide is then transported to the cell membrane surface. In B-cells, the interaction between HLA-DM and MHC class II molecules is regulated by HLA-DO. Primary dendritic cells (DCs) also to express HLA-DO. Lysosomal microenvironment has been implicated in the regulation of antigen loading into MHC II molecules, increased acidification produces increased proteolysis and efficient peptide loading. This is HLA class II histocompatibility antigen, DP beta 1 chain (HLA-DPB1) from Homo sapiens (Human).